The sequence spans 476 residues: UDP-glucose 6-dehydrogenase (476 aa).

Residues 7–12 (GAGYVG), aspartate 32, arginine 37, 85–89 (VNTPT), 126–127 (ST), and glutamate 161 each bind NAD(+). Substrate contacts are provided by residues 157–161 (EFLAE), 216–220 (KLAAN), arginine 256, and 263–269 (QASVGFG). The active-site Nucleophile is the cysteine 272. 272–275 (CFQK) is a binding site for NAD(+). 334 to 335 (FK) contacts substrate. Arginine 342 serves as a coordination point for NAD(+). Substrate is bound at residue arginine 439.

Belongs to the UDP-glucose/GDP-mannose dehydrogenase family.

It catalyses the reaction UDP-alpha-D-glucose + 2 NAD(+) + H2O = UDP-alpha-D-glucuronate + 2 NADH + 3 H(+). Its pathway is nucleotide-sugar biosynthesis; UDP-alpha-D-glucuronate biosynthesis; UDP-alpha-D-glucuronate from UDP-alpha-D-glucose: step 1/1. Involved in the biosynthesis of glycosaminoglycans; hyaluronan, chondroitin sulfate and heparan sulfate. Required for wingless signaling in different tissues. The polypeptide is UDP-glucose 6-dehydrogenase (sgl) (Drosophila melanogaster (Fruit fly)).